The chain runs to 348 residues: Protein RecA (348 aa).

66-73 is a binding site for ATP; the sequence is GPESSGKT.

This sequence belongs to the RecA family.

The protein resides in the cytoplasm. Functionally, can catalyze the hydrolysis of ATP in the presence of single-stranded DNA, the ATP-dependent uptake of single-stranded DNA by duplex DNA, and the ATP-dependent hybridization of homologous single-stranded DNAs. It interacts with LexA causing its activation and leading to its autocatalytic cleavage. This chain is Protein RecA, found in Burkholderia lata (strain ATCC 17760 / DSM 23089 / LMG 22485 / NCIMB 9086 / R18194 / 383).